Reading from the N-terminus, the 181-residue chain is Peptide deformylase (181 aa).

Fe cation-binding residues include Cys-99 and His-141. The active site involves Glu-142. Fe cation is bound at residue His-145.

This sequence belongs to the polypeptide deformylase family. Fe(2+) is required as a cofactor.

It carries out the reaction N-terminal N-formyl-L-methionyl-[peptide] + H2O = N-terminal L-methionyl-[peptide] + formate. In terms of biological role, removes the formyl group from the N-terminal Met of newly synthesized proteins. Requires at least a dipeptide for an efficient rate of reaction. N-terminal L-methionine is a prerequisite for activity but the enzyme has broad specificity at other positions. The protein is Peptide deformylase of Chlamydia trachomatis serovar A (strain ATCC VR-571B / DSM 19440 / HAR-13).